The chain runs to 115 residues: SOSS complex subunit C homolog (115 aa).

Belongs to the SOSS-C family.

The protein is SOSS complex subunit C homolog of Drosophila mojavensis (Fruit fly).